The sequence spans 542 residues: Carbamoyl phosphate synthase large chain, C-terminal section (542 aa).

The carbamoyl phosphate synthetic domain stretch occupies residues 1–389; sequence MSDKVLVIGA…WKAQLAAGHE (389 aa). In terms of domain architecture, ATP-grasp spans 122-316; it reads SKLLKKLGIP…LAKIGTKAIL (195 aa). Positions 158, 197, 199, 204, 230, 231, 232, 233, 273, and 287 each coordinate ATP. Positions 273, 287, and 289 each coordinate Mg(2+). Residues Q273, E287, and N289 each contribute to the Mn(2+) site. One can recognise an MGS-like domain in the interval 388–542; the sequence is HELPLEGTAV…KPEELTRYGG (155 aa). The interval 390 to 542 is allosteric domain; sequence LPLEGTAVIS…KPEELTRYGG (153 aa).

This sequence belongs to the CarB family. As to quaternary structure, composed of two chains; the small (or glutamine) chain promotes the hydrolysis of glutamine to ammonia, which is used by the large (or ammonia) chain to synthesize carbamoyl phosphate. Tetramer of heterodimers (alpha,beta)4. Mg(2+) is required as a cofactor. The cofactor is Mn(2+).

The enzyme catalyses hydrogencarbonate + L-glutamine + 2 ATP + H2O = carbamoyl phosphate + L-glutamate + 2 ADP + phosphate + 2 H(+). The catalysed reaction is hydrogencarbonate + NH4(+) + 2 ATP = carbamoyl phosphate + 2 ADP + phosphate + 2 H(+). The protein operates within amino-acid biosynthesis; L-arginine biosynthesis; carbamoyl phosphate from bicarbonate: step 1/1. It functions in the pathway pyrimidine metabolism; UMP biosynthesis via de novo pathway; (S)-dihydroorotate from bicarbonate: step 1/3. Functionally, large subunit of the glutamine-dependent carbamoyl phosphate synthetase (CPSase). CPSase catalyzes the formation of carbamoyl phosphate from the ammonia moiety of glutamine, carbonate, and phosphate donated by ATP, constituting the first step of 2 biosynthetic pathways, one leading to arginine and/or urea and the other to pyrimidine nucleotides. The large subunit (synthetase) binds the substrates ammonia (free or transferred from glutamine from the small subunit), hydrogencarbonate and ATP and carries out an ATP-coupled ligase reaction, activating hydrogencarbonate by forming carboxy phosphate which reacts with ammonia to form carbamoyl phosphate. The polypeptide is Carbamoyl phosphate synthase large chain, C-terminal section (carB2) (Methanopyrus kandleri (strain AV19 / DSM 6324 / JCM 9639 / NBRC 100938)).